A 289-amino-acid chain; its full sequence is Ribosomal protein L11 methyltransferase (289 aa).

The S-adenosyl-L-methionine site is built by T142, G163, D185, and N226.

Belongs to the methyltransferase superfamily. PrmA family.

The protein resides in the cytoplasm. It catalyses the reaction L-lysyl-[protein] + 3 S-adenosyl-L-methionine = N(6),N(6),N(6)-trimethyl-L-lysyl-[protein] + 3 S-adenosyl-L-homocysteine + 3 H(+). In terms of biological role, methylates ribosomal protein L11. The protein is Ribosomal protein L11 methyltransferase of Legionella pneumophila (strain Paris).